Consider the following 214-residue polypeptide: ATP-dependent Clp protease proteolytic subunit (214 aa).

Ser113 acts as the Nucleophile in catalysis. His138 is a catalytic residue.

Belongs to the peptidase S14 family. Fourteen ClpP subunits assemble into 2 heptameric rings which stack back to back to give a disk-like structure with a central cavity, resembling the structure of eukaryotic proteasomes.

Its subcellular location is the cytoplasm. The catalysed reaction is Hydrolysis of proteins to small peptides in the presence of ATP and magnesium. alpha-casein is the usual test substrate. In the absence of ATP, only oligopeptides shorter than five residues are hydrolyzed (such as succinyl-Leu-Tyr-|-NHMec, and Leu-Tyr-Leu-|-Tyr-Trp, in which cleavage of the -Tyr-|-Leu- and -Tyr-|-Trp bonds also occurs).. In terms of biological role, cleaves peptides in various proteins in a process that requires ATP hydrolysis. Has a chymotrypsin-like activity. Plays a major role in the degradation of misfolded proteins. This chain is ATP-dependent Clp protease proteolytic subunit, found in Teredinibacter turnerae (strain ATCC 39867 / T7901).